We begin with the raw amino-acid sequence, 483 residues long: Serine/threonine-protein phosphatase 2A regulatory subunit phr2AB (483 aa).

WD repeat units lie at residues 22–61 (SDAN…QSSK) and 88–129 (EIEE…IKQV). The segment at 132-152 (SATTTGPSYNGSLASNNTRSP) is disordered. WD repeat units follow at residues 206–244 (AHAY…ECFN), 255–295 (DLTE…LCDN), 314–352 (EIIS…KPVK), and 369–410 (ENDC…DVCL). The segment at 421-443 (TKTLTTKMKLRSSKKEPKKPEDI) is disordered. Residues 433-443 (SKKEPKKPEDI) are compositionally biased toward basic and acidic residues. The WD 7 repeat unit spans residues 449–483 (EYTKKTLHCAWHPKDNLIAVGAANTVYLYAATENK).

Belongs to the phosphatase 2A regulatory subunit B family. In terms of assembly, PP2A consists of a trimeric holoenzyme, composed of a 37 kDa catalytic subunit (C subunit) and a 65 kDa constant regulatory subunit (A subunit), that associates with a variety of regulatory subunits (B subunit) such as phr2AB (B55) and psrA (B56 homolog). The trimer may partially dissociates into a core 'AC' dimer equally active compared to the trimer.

The protein localises to the cytoplasm. It localises to the cytosol. Its subcellular location is the cytoskeleton. It is found in the microtubule organizing center. The protein resides in the centrosome. In terms of biological role, the B regulatory subunit might modulate substrate selectivity and catalytic activity, and might also direct the localization of the catalytic enzyme to a particular subcellular compartment. The sequence is that of Serine/threonine-protein phosphatase 2A regulatory subunit phr2AB (phr2aB) from Dictyostelium discoideum (Social amoeba).